The primary structure comprises 303 residues: Elongation factor Ts (303 aa).

An involved in Mg(2+) ion dislocation from EF-Tu region spans residues 81–84; sequence TDFV.

The protein belongs to the EF-Ts family.

It localises to the cytoplasm. In terms of biological role, associates with the EF-Tu.GDP complex and induces the exchange of GDP to GTP. It remains bound to the aminoacyl-tRNA.EF-Tu.GTP complex up to the GTP hydrolysis stage on the ribosome. The protein is Elongation factor Ts of Mesomycoplasma hyopneumoniae (strain J / ATCC 25934 / NCTC 10110) (Mycoplasma hyopneumoniae).